Here is a 537-residue protein sequence, read N- to C-terminus: P2Y purinoceptor 4 (537 aa).

The Extracellular portion of the chain corresponds to 1–49 (MTEDIMATSYPTFLTTPYLPMKLLMNLTNDTEDICVFDEGFKFLLLPVS). 2 N-linked (GlcNAc...) asparagine glycosylation sites follow: N26 and N29. A helical transmembrane segment spans residues 50–70 (YSAVFMVGLPLNIAAMWIFIA). Topologically, residues 71–79 (KMRPWNPTT) are cytoplasmic. The chain crosses the membrane as a helical span at residues 80–100 (VYMFNLALSDTLYVLSLPTLV). Over 101 to 118 (YYYADKNNWPFGEVLCKL) the chain is Extracellular. A disulfide bridge links C116 with C193. A helical membrane pass occupies residues 119 to 139 (VRFLFYANLYSSILFLTCISV). Over 140-161 (HRYRGVCHPITSLRRMNAKHAY) the chain is Cytoplasmic. Residues 162–182 (VICALVWLSVTLCLVPNLIFV) form a helical membrane-spanning segment. Residues 183 to 210 (TVSPKVKNTICHDTTRPEDFARYVEYST) lie on the Extracellular side of the membrane. The helical transmembrane segment at 211–231 (AIMCLLFGIPCLIIAGCYGLM) threads the bilayer. At 232 to 254 (TRELMKPIVSGNQQTLPSYKKRS) the chain is on the cytoplasmic side. Residues 255–275 (IKTIIFVMIAFAICFMPFHIT) form a helical membrane-spanning segment. The Extracellular portion of the chain corresponds to 276 to 292 (RTLYYYARLLGIKCYAL). A helical transmembrane segment spans residues 293-316 (NVINVTYKVTRPLASANSCIDPIL). Topologically, residues 317–537 (YFLANDRYRR…EKELQNFPKA (221 aa)) are cytoplasmic. Positions 401–505 (NRRSTIKRNS…GEGTSTWNLL (105 aa)) are disordered. Basic and acidic residues-rich tracts occupy residues 409 to 423 (NSTD…RHGE) and 431 to 447 (VVEK…RKTT). The segment covering 448-465 (EQSSKTNAEQDELQTQID) has biased composition (polar residues).

It belongs to the G-protein coupled receptor 1 family.

It is found in the cell membrane. Its function is as follows. Receptor for extracellular ATP, UTP, CTP, GTP and ITP. The activity of this receptor is mediated by G proteins which activate a phosphatidylinositol-calcium second messenger system. May play a key role in the early development of neural tissue. The chain is P2Y purinoceptor 4 (p2ry4) from Xenopus laevis (African clawed frog).